The sequence spans 269 residues: Putative pyruvate, phosphate dikinase regulatory protein (269 aa).

An ADP-binding site is contributed by 151–158; it reads GISRTSKT.

It belongs to the pyruvate, phosphate/water dikinase regulatory protein family. PDRP subfamily.

It catalyses the reaction N(tele)-phospho-L-histidyl/L-threonyl-[pyruvate, phosphate dikinase] + ADP = N(tele)-phospho-L-histidyl/O-phospho-L-threonyl-[pyruvate, phosphate dikinase] + AMP + H(+). It carries out the reaction N(tele)-phospho-L-histidyl/O-phospho-L-threonyl-[pyruvate, phosphate dikinase] + phosphate + H(+) = N(tele)-phospho-L-histidyl/L-threonyl-[pyruvate, phosphate dikinase] + diphosphate. Its function is as follows. Bifunctional serine/threonine kinase and phosphorylase involved in the regulation of the pyruvate, phosphate dikinase (PPDK) by catalyzing its phosphorylation/dephosphorylation. This chain is Putative pyruvate, phosphate dikinase regulatory protein, found in Staphylococcus aureus.